A 507-amino-acid polypeptide reads, in one-letter code: Zinc finger protein Aiolos (507 aa).

Residues 1 to 85 (MEDIQPTVEL…PMGDAEESEM (85 aa)) are disordered. Thr-20 carries the phosphothreonine modification. Residues Ser-22 and Ser-42 each carry the phosphoserine modification. Basic and acidic residues-rich tracts occupy residues 33–46 (KPHE…REAP) and 56–72 (DSMK…ENIM). Residues Lys-61, Lys-73, and Lys-100 each participate in a glycyl lysine isopeptide (Lys-Gly) (interchain with G-Cter in SUMO2) cross-link. 3 consecutive C2H2-type zinc fingers follow at residues 117-139 (MNCD…KRSH), 145-167 (FQCN…IKLH), and 173-195 (FKCH…LRTH). A C2H2-type 4; atypical zinc finger spans residues 201–223 (YKCEFCGRSYKQRSSLEEHKERC). Lys-244 is covalently cross-linked (Glycyl lysine isopeptide (Lys-Gly) (interchain with G-Cter in SUMO2)). At Thr-325 the chain carries Phosphothreonine. The tract at residues 370-396 (LPSERGLSPNNSAQDSTDTDSNHEDRQ) is disordered. Phosphoserine is present on Ser-377. A C2H2-type 5 zinc finger spans residues 450-472 (FRCDHCHVLFLDYVMFTIHMGCH). The mediates homodimerization and heterodimerization stretch occupies residues 450–502 (FRCDHCHVLFLDYVMFTIHMGCHGFRDPFECNMCGYRSHDRYEFSSHIARGEH). A C2H2-type 6; atypical zinc finger spans residues 478–502 (FECNMCGYRSHDRYEFSSHIARGEH).

This sequence belongs to the Ikaros C2H2-type zinc-finger protein family. As to quaternary structure, homodimer. Heterodimer with other IKAROS family members. Interacts with IKZF4 and IKZF5. Interacts with HRAS. Interacts with FOXP3; this interaction may be required for silencing target genes and regulating the suppressive activity of FOXP3-positive regulatory T-cells (Treg). Interacts with BCL21L isoform Bcl-X(L); this interaction blocks the anti-apoptotic role of BCL21L. Associates with histone deacetylase complexes containing HDAC1, MTA2 and SIN3A. Interacts with IKZF1. Expression is restricted to lymphoid tissues. Expressed at highest levels in spleen and at lower levels in the thymus and bone marrow. First detected in more committed lymphoid progenitors and strongly up-regulated as these differentiate into pre-T and pre-B cell precursors.

The protein localises to the nucleus. It localises to the cytoplasm. In terms of biological role, transcription factor that plays an important role in the regulation of lymphocyte differentiation. Binds to GGGAA. Plays an essential role in regulation of B-cell differentiation, proliferation and maturation to an effector state. Involved in regulating BCL2 expression and controlling apoptosis in T-cells in an IL2-dependent manner. The protein is Zinc finger protein Aiolos (Ikzf3) of Mus musculus (Mouse).